The primary structure comprises 393 residues: Interleukin-1 receptor type 2 (393 aa).

The signal sequence occupies residues 1–13 (MFRLYVLVMGVSA). The Extracellular portion of the chain corresponds to 14-347 (FTLQPAAHTG…RTTVKEPPPT (334 aa)). Cystine bridges form between Cys28–Cys116, Cys50–Cys108, and Cys152–Cys207. Ig-like C2-type domains follow at residues 29–120 (PVRG…DKVS), 134–221 (PFIS…YNIT), and 237–342 (PVII…TTVK). Asn66, Asn72, and Asn112 each carry an N-linked (GlcNAc...) asparagine glycan. Residues Asn219 and Asn277 are each glycosylated (N-linked (GlcNAc...) asparagine). Cys258 and Cys326 are joined by a disulfide. The chain crosses the membrane as a helical span at residues 348-368 (FSWGIVLAPLALAFLVLGGIW). The Cytoplasmic portion of the chain corresponds to 369–393 (MHRRCKHRTGKADGLTVLRPHHQDF).

The protein belongs to the interleukin-1 receptor family. In terms of assembly, forms a non-signaling receptor complex consisting of IL1R2 and IL1RAP. Post-translationally, a soluble form (sIL1R2) can also be produced by proteolytic cleavage at the cell surface (shedding) involving a metalloproteinase.

The protein localises to the secreted. The protein resides in the cell membrane. Non-signaling receptor for IL1A, IL1B and IL1RN. Reduces IL1B activities. Serves as a decoy receptor by competitive binding to IL1B and preventing its binding to IL1R1. Also modulates cellular response through non-signaling association with IL1RAP after binding to IL1B. IL1R2 (membrane and secreted forms) preferentially binds IL1B and poorly IL1A and IL1RN. The secreted IL1R2 recruits secreted IL1RAP with high affinity; this complex formation may be the dominant mechanism for neutralization of IL1B by secreted/soluble receptors. This chain is Interleukin-1 receptor type 2 (IL1R2), found in Chlorocebus aethiops (Green monkey).